The following is a 131-amino-acid chain: Small ribosomal subunit protein bS6 (131 aa).

Residues Thr-97–Glu-131 are disordered. The segment covering Lys-104–Glu-131 has biased composition (basic and acidic residues).

The protein belongs to the bacterial ribosomal protein bS6 family.

In terms of biological role, binds together with bS18 to 16S ribosomal RNA. The sequence is that of Small ribosomal subunit protein bS6 from Shewanella baltica (strain OS223).